The sequence spans 304 residues: Glutaminase (304 aa).

Substrate-binding residues include Ser-63, Asn-113, Glu-157, Asn-164, Tyr-188, Tyr-240, and Val-258.

It belongs to the glutaminase family. In terms of assembly, homotetramer.

The catalysed reaction is L-glutamine + H2O = L-glutamate + NH4(+). This Christiangramia forsetii (strain DSM 17595 / CGMCC 1.15422 / KT0803) (Gramella forsetii) protein is Glutaminase.